A 462-amino-acid polypeptide reads, in one-letter code: Metal cation symporter ZIP14 (462 aa).

The signal sequence occupies residues 1–16 (MPLLLLSALLPFSLMA). At 17-138 (GPTPSTGKEL…PSPGEVWGYG (122 aa)) the chain is on the extracellular side. N-linked (GlcNAc...) asparagine glycosylation is found at Asn-42, Asn-68, Asn-83, and Asn-119. The helical transmembrane segment at 139-159 (FLCVTVISLCSLFGAGVVPFM) threads the bilayer. The Cytoplasmic portion of the chain corresponds to 160–167 (KKACYKRL). A helical membrane pass occupies residues 168–188 (LLFCIALAIGTLFSNALFQLI). At 189–201 (PEAFGFNPLEDSY) the chain is on the extracellular side. Residues 202 to 222 (VFTSSVIFGGFYLFFFTEKVL) form a helical membrane-spanning segment. At 223-322 (KMMLKQKHEH…SDGLHNFIDG (100 aa)) the chain is on the cytoplasmic side. The HHHGHXHX-motif signature appears at 230–237 (HEHGHSHY). The disordered stretch occupies residues 235-285 (SHYSADTSKRDAEEGVTEKLQNGDLDHMIPPPHGSESDLRGDEKAVQQQDL). Basic and acidic residues-rich tracts occupy residues 241–251 (TSKRDAEEGVT) and 269–279 (SESDLRGDEKA). The helical transmembrane segment at 323 to 343 (LAIGASFTVSVFQGVSTSIAI) threads the bilayer. The Extracellular segment spans residues 344–367 (LCEEFPHELGDFVILLNAGMSIPQ). Residues 346 to 351 (EEFPHE) carry the XEXPHE-motif motif. The helical transmembrane segment at 368–388 (ALFFNFLSACCCYLGLAFGIL) threads the bilayer. The Cytoplasmic portion of the chain corresponds to 389–396 (AGSHFSSN). A helical membrane pass occupies residues 397–417 (WIFALAGGMFLYIALSDMFPE). Topologically, residues 418-431 (MNEVSKEDEEGGRA) are extracellular. A helical membrane pass occupies residues 432-452 (FSAFMIQNAGLLTGFAIMLLL). Over 453 to 462 (TTFSGQIQLG) the chain is Cytoplasmic.

It belongs to the ZIP transporter (TC 2.A.5) family. Homotrimer.

It is found in the cell membrane. The protein resides in the apical cell membrane. It localises to the basolateral cell membrane. Its subcellular location is the early endosome membrane. The protein localises to the late endosome membrane. It is found in the lysosome membrane. It catalyses the reaction Zn(2+)(out) + 2 hydrogencarbonate(out) = Zn(2+)(in) + 2 hydrogencarbonate(in). It carries out the reaction Mn(2+)(out) + 2 hydrogencarbonate(out) = Mn(2+)(in) + 2 hydrogencarbonate(in). The catalysed reaction is Fe(2+)(out) + 2 hydrogencarbonate(out) = Fe(2+)(in) + 2 hydrogencarbonate(in). The enzyme catalyses Cd(2+)(out) + 2 hydrogencarbonate(out) = Cd(2+)(in) + 2 hydrogencarbonate(in). Electroneutral transporter of the plasma membrane mediating the cellular uptake of the divalent metal cations zinc, manganese and iron that are important for tissue homeostasis, metabolism, development and immunity. Functions as an energy-dependent symporter, transporting through the membranes an electroneutral complex composed of a divalent metal cation and two bicarbonate anions. Beside these endogenous cellular substrates, can also import cadmium a non-essential metal which is cytotoxic and carcinogenic. This is Metal cation symporter ZIP14 from Xenopus tropicalis (Western clawed frog).